Reading from the N-terminus, the 381-residue chain is MSNPSPQVPEEEASTSVCRPKSSMASTSRRQRRERRFRRYLSAGRLVRAQALLQRHPGLDVDAGQPPPLHRACARHDAPALCLLLRLGADPAHQDRHGDTALHAAARQGPDAYTDFFLPLLSRCPSAMGIKNKDGETPGQILGWGPPWDSAEEEEEDDASKEREWRQKLQGELEDEWQEVMGRFEGDASHETQEPESFSAWSDRLAREHAQKCQQQQREAEGSRRPPRAEGSSQSWRQQEEEQRLFRERARAKEEELRESRARRAQEALGDREPKPTRAGPREEHPRGAGRGSLWRFGDVPWPCPGGGDPEAMAAALVARGPPLEEQGALRRYLRVQQVRWHPDRFLQRFRSQIETWELGRVMGAVTALSQALNRHAEALK.

Residues 1–34 (MSNPSPQVPEEEASTSVCRPKSSMASTSRRQRRE) form a disordered region. 2 ANK repeats span residues 64 to 93 (GQPP…DPAH) and 97 to 130 (HGDT…AMGI). Disordered stretches follow at residues 129–167 (GIKN…EWRQ) and 186–294 (GDAS…RGSL). Ser150 is subject to Phosphoserine. Residues 150–159 (SAEEEEEDDA) show a composition bias toward acidic residues. Composition is skewed to basic and acidic residues over residues 218–228 (REAEGSRRPPR) and 238–287 (QQEE…EHPR).

As to quaternary structure, interacts with CACTIN (via N-terminal domain); the interaction occurs in a proinflammatory-independent manner. Detected in different cell types including monocytes, T-cells, B-cells and hepatocytes.

It is found in the nucleus. Functionally, involved in the regulation of innate immune response. Acts as negative regulator of Toll-like receptor and interferon-regulatory factor (IRF) signaling pathways. Contributes to the negative regulation of transcriptional activation of NF-kappa-B target genes in response to endogenous proinflammatory stimuli. The chain is NF-kappa-B inhibitor-like protein 1 (NFKBIL1) from Homo sapiens (Human).